Here is a 124-residue protein sequence, read N- to C-terminus: uncharacterized protein (124 aa).

The protein belongs to the asfivirus H124R family.

The protein resides in the virion. This is an uncharacterized protein from Ornithodoros (relapsing fever ticks).